Here is a 309-residue protein sequence, read N- to C-terminus: Methionyl-tRNA formyltransferase (309 aa).

Residue serine 107–proline 110 coordinates (6S)-5,6,7,8-tetrahydrofolate.

Belongs to the Fmt family.

It catalyses the reaction L-methionyl-tRNA(fMet) + (6R)-10-formyltetrahydrofolate = N-formyl-L-methionyl-tRNA(fMet) + (6S)-5,6,7,8-tetrahydrofolate + H(+). Its function is as follows. Attaches a formyl group to the free amino group of methionyl-tRNA(fMet). The formyl group appears to play a dual role in the initiator identity of N-formylmethionyl-tRNA by promoting its recognition by IF2 and preventing the misappropriation of this tRNA by the elongation apparatus. This chain is Methionyl-tRNA formyltransferase, found in Borrelia hermsii (strain HS1 / DAH).